The primary structure comprises 713 residues: Low-density lipoprotein receptor-related protein 10 (713 aa).

The signal sequence occupies residues 1-16 (MLLATLLLLLLGGALA). Residues 17–440 (HPDRIIFPNH…WDCSYVLPRK (424 aa)) are Extracellular-facing. 2 disulfides stabilise this stretch: Cys-28–Cys-57 and Cys-80–Cys-98. The CUB 1 domain maps to 28 to 136 (CEDPPAVLLE…QGFLLSYSQD (109 aa)). The N-linked (GlcNAc...) asparagine glycan is linked to Asn-56. Residue Asn-111 is glycosylated (N-linked (GlcNAc...) asparagine). One can recognise an LDL-receptor class A 1 domain in the interval 139–175 (MCLQEEFQCLNHRCVSAVQRCDGVDACGDGSDEAGCS). 4 cysteine pairs are disulfide-bonded: Cys-140–Cys-152, Cys-147–Cys-165, Cys-159–Cys-174, and Cys-192–Cys-220. A CUB 2 domain is found at 192–305 (CNVTLEDFYG…RGFNATYHVR (114 aa)). Asn-193 and Asn-299 each carry an N-linked (GlcNAc...) asparagine glycan. 3 consecutive LDL-receptor class A domains span residues 307–354 (YCLP…EDCP), 355–397 (GCPP…RRCR), and 398–434 (HCQPGNFRCRDEKCVYETWVCDGQPDCADGSDEWDCS). Disulfide bonds link Cys-308–Cys-331, Cys-315–Cys-344, Cys-338–Cys-353, Cys-356–Cys-374, Cys-363–Cys-387, Cys-381–Cys-396, Cys-399–Cys-411, Cys-406–Cys-424, and Cys-418–Cys-433. Residues 441 to 461 (VITAAVIGSLVCGLLLVIALG) traverse the membrane as a helical segment. The Cytoplasmic segment spans residues 462-713 (CTCKLYAIRT…AEAEDEPLLT (252 aa)). The interval 564–637 (GLLPRTNTPA…SPAPTTVPEA (74 aa)) is disordered. Over residues 569–584 (TNTPARASEARSQVTP) the composition is skewed to polar residues. Position 596 is a phosphothreonine (Thr-596). A compositionally biased stretch (low complexity) spans 621–636 (PLPSASTSPAPTTVPE).

The protein belongs to the LDLR family. In terms of tissue distribution, expressed in blood leukocyte, lung, placenta, small intestine, liver, kidney, spleen, thymus, colon, skeletal muscle and heart.

Its subcellular location is the membrane. The protein resides in the coated pit. Probable receptor, which is involved in the internalization of lipophilic molecules and/or signal transduction. May be involved in the uptake of lipoprotein APOE in liver. The polypeptide is Low-density lipoprotein receptor-related protein 10 (LRP10) (Homo sapiens (Human)).